A 476-amino-acid chain; its full sequence is Angiotensinogen (476 aa).

An N-terminal signal peptide occupies residues 1–24 (MAPAGLSLGATILCLLAWAGLAAG). An intrachain disulfide couples C42 to C161. Positions 45–64 (LEKPSVETPADPTLTPVPIQ) are disordered. An N-linked (GlcNAc...) asparagine glycan is attached at N295.

The protein belongs to the serpin family. Post-translationally, in response to low blood pressure, the enzyme renin/REN cleaves angiotensinogen to produce angiotensin-1. Angiotensin-1 is a substrate of ACE (angiotensin converting enzyme) that removes a dipeptide to yield the physiologically active peptide angiotensin-2. Angiotensin-1 and angiotensin-2 can be further processed to generate angiotensin-3, angiotensin-4. Angiotensin 1-9 is cleaved from angiotensin-1 by ACE2 and can be further processed by ACE to produce angiotensin 1-7, angiotensin 1-5 and angiotensin 1-4. Angiotensin 1-7 has also been proposed to be cleaved from angiotensin-2 by ACE2 or from angiotensin-1 by MME (neprilysin). The disulfide bond is labile. Angiotensinogen is present in the circulation in a near 40:60 ratio with the oxidized disulfide-bonded form, which preferentially interacts with receptor-bound renin.

The protein resides in the secreted. Functionally, essential component of the renin-angiotensin system (RAS), a potent regulator of blood pressure, body fluid and electrolyte homeostasis. Its function is as follows. Acts directly on vascular smooth muscle as a potent vasoconstrictor, affects cardiac contractility and heart rate through its action on the sympathetic nervous system, and alters renal sodium and water absorption through its ability to stimulate the zona glomerulosa cells of the adrenal cortex to synthesize and secrete aldosterone. Acts by binding to angiotensin receptors AGTR1 and AGTR2. Also binds the DEAR/FBXW7-AS1 receptor. Stimulates aldosterone release. In terms of biological role, is a ligand for the G-protein coupled receptor MAS1. Has vasodilator and antidiuretic effects. Has an antithrombotic effect that involves MAS1-mediated release of nitric oxide from platelets. The chain is Angiotensinogen (AGT) from Ovis aries (Sheep).